The sequence spans 231 residues: Protein OPG061 (231 aa).

It belongs to the orthopoxvirus OPG058 family.

The protein resides in the host nucleus. Its subcellular location is the host nucleolus. The sequence is that of Protein OPG061 (OPG061) from Variola virus.